Consider the following 375-residue polypeptide: Tyrosine--tRNA ligase (375 aa).

L-tyrosine contacts are provided by Tyr-37, Tyr-168, Gln-172, Asp-175, and Gln-190. A 'KMSKS' region motif is present at residues 251-255 (KMSKS). An ATP-binding site is contributed by Lys-254.

This sequence belongs to the class-I aminoacyl-tRNA synthetase family. TyrS type 4 subfamily. Homodimer.

It is found in the cytoplasm. The enzyme catalyses tRNA(Tyr) + L-tyrosine + ATP = L-tyrosyl-tRNA(Tyr) + AMP + diphosphate + H(+). In terms of biological role, catalyzes the attachment of tyrosine to tRNA(Tyr) in a two-step reaction: tyrosine is first activated by ATP to form Tyr-AMP and then transferred to the acceptor end of tRNA(Tyr). This chain is Tyrosine--tRNA ligase, found in Pyrococcus horikoshii (strain ATCC 700860 / DSM 12428 / JCM 9974 / NBRC 100139 / OT-3).